We begin with the raw amino-acid sequence, 172 residues long: 3-hydroxydecanoyl-[acyl-carrier-protein] dehydratase (172 aa).

His71 is an active-site residue.

This sequence belongs to the thioester dehydratase family. FabA subfamily. In terms of assembly, homodimer.

The protein localises to the cytoplasm. The enzyme catalyses a (3R)-hydroxyacyl-[ACP] = a (2E)-enoyl-[ACP] + H2O. It catalyses the reaction (3R)-hydroxydecanoyl-[ACP] = (2E)-decenoyl-[ACP] + H2O. The catalysed reaction is (2E)-decenoyl-[ACP] = (3Z)-decenoyl-[ACP]. Its pathway is lipid metabolism; fatty acid biosynthesis. Its function is as follows. Necessary for the introduction of cis unsaturation into fatty acids. Catalyzes the dehydration of (3R)-3-hydroxydecanoyl-ACP to E-(2)-decenoyl-ACP and then its isomerization to Z-(3)-decenoyl-ACP. Can catalyze the dehydratase reaction for beta-hydroxyacyl-ACPs with saturated chain lengths up to 16:0, being most active on intermediate chain length. In Escherichia coli O127:H6 (strain E2348/69 / EPEC), this protein is 3-hydroxydecanoyl-[acyl-carrier-protein] dehydratase.